A 202-amino-acid polypeptide reads, in one-letter code: Small ribosomal subunit protein uS4c (202 aa).

The S4 RNA-binding domain occupies 90–148 (MRLDNVIFRLGMSSTIPGARQLVNHRHIMINDEMVDTPGYNCKPRDIITLKNISESRSG).

It belongs to the universal ribosomal protein uS4 family. As to quaternary structure, part of the 30S ribosomal subunit. Contacts protein S5. The interaction surface between S4 and S5 is involved in control of translational fidelity.

The protein resides in the plastid. It localises to the chloroplast. One of the primary rRNA binding proteins, it binds directly to 16S rRNA where it nucleates assembly of the body of the 30S subunit. Functionally, with S5 and S12 plays an important role in translational accuracy. This is Small ribosomal subunit protein uS4c (rps4) from Haplomitrium hookeri (Hooker's flapwort).